Consider the following 497-residue polypeptide: MGQKFSIKCKKQSKNKNTSKCQKIPKKAYEGPPGSYMVKAKYKYAASGDTDISFEEKEIMYVLEQFDEFWLKVVKQKDNKEGLVPSNYVSKQDGSPQSVEAWREIQRWEAEKSLMKIGLQKGTYIIRPSRKENSYALSVRDFDEKKKICIVKHFQIKTLQDEKGISYSVNIRNFPNILTLIQFYEKNGIGNTHIPLTDPMPDNYQPPVHFQDIEINRENIEILNEIGRGFFGSVHRAKWGRSYEVAAKMLQSSKAEREKFVLEAKIMHKLRHRKIVELLGVCTEPQDMPMLIIVEYMKNGSLKEYLKTPDGKKTNLNQMVHMMAEISEGMAYLESEKVVHRDLRADNILVANDLTRKVADFGLTELTDGSLGDQEKKTLRFPYKWTAPEAAKSKVFTSKSDVWSYGIVMFEILTWASSPYPDIPAKEVIEKVSKGYRMPNPEKFITGVCCPDEIYKIMIWCWDANPEKRPTFLVLQEKMDLLIVDTLTNNAYYSHSK.

The segment at 1–25 (MGQKFSIKCKKQSKNKNTSKCQKIP) is disordered. The region spanning 33–94 (PGSYMVKAKY…PSNYVSKQDG (62 aa)) is the SH3 domain. Residues 100-200 (EAWREIQRWE…NTHIPLTDPM (101 aa)) form the SH2 domain. Residues 220-482 (IEILNEIGRG…LVLQEKMDLL (263 aa)) enclose the Protein kinase domain. ATP is bound by residues 226 to 234 (IGRGFFGSV) and Lys-248. Asp-342 (proton acceptor) is an active-site residue.

The protein belongs to the protein kinase superfamily. Tyr protein kinase family.

It catalyses the reaction L-tyrosyl-[protein] + ATP = O-phospho-L-tyrosyl-[protein] + ADP + H(+). In Girardia tigrina (Planarian), this protein is Tyrosine-protein kinase SPK-1.